Here is a 195-residue protein sequence, read N- to C-terminus: MGQIEWAMWANEQALASGLILITGGIVATAGRFTQWYFGAYSIVAGVFVCLLEYPRGKRKKGSTMERWGQKYMTAVVKLFGPFTRNYYVRAVLHLLLSVPAGFLLATILGTACLAIASGIYLLAAVRGEQWTPIEPKPRERPQIGGTIKQPPSNPPPRPPAEARKKPSEEEAAVAAGGPPGGPQVNPIPVTDEVV.

Residues 2–7 (GQIEWA) lie on the Cytoplasmic side of the membrane. Residues 8-30 (MWANEQALASGLILITGGIVATA) form a helical membrane-spanning segment. The Extracellular portion of the chain corresponds to 31-35 (GRFTQ). Residues 36 to 53 (WYFGAYSIVAGVFVCLLE) traverse the membrane as a helical segment. Residues 54–69 (YPRGKRKKGSTMERWG) are Cytoplasmic-facing. Residues 70 to 80 (QKYMTAVVKLF) lie within the membrane without spanning it. The Cytoplasmic portion of the chain corresponds to 81–86 (GPFTRN). The helical transmembrane segment at 87–104 (YYVRAVLHLLLSVPAGFL) threads the bilayer. Leu105 is a topological domain (extracellular). The chain crosses the membrane as a helical span at residues 106-126 (ATILGTACLAIASGIYLLAAV). Topologically, residues 127–195 (RGEQWTPIEP…NPIPVTDEVV (69 aa)) are cytoplasmic. A disordered region spans residues 134 to 195 (IEPKPRERPQ…NPIPVTDEVV (62 aa)). Thr147 carries the post-translational modification Phosphothreonine. Residue Lys149 forms a Glycyl lysine isopeptide (Lys-Gly) (interchain with G-Cter in ubiquitin) linkage. At Ser168 the chain carries Phosphoserine.

Belongs to the p22phox family. Component of the phagocyte NADPH oxidase core complex/cytochrome b558 complex, composed of CYBB (heavy chain (beta)) and CYBA (light chain (alpha)). Component of the phagocyte NADPH oxidase complex composed of an obligatory core heterodimer formed by the membrane proteins CYBA and CYBB and the cytosolic regulatory subunits NCF1/p47-phox, NCF2/p67-phox, NCF4/p40-phox and the small GTPase RAC1 or RAC2. Interacts with NCF1 (via SH3 domain). Interacts with SH3PXD2A. Interacts with DUOX1, DUOX2 and TPO. Interacts with NOX4; this interaction mediates superoxide generation. Interacts with calprotectin (S100A8/9). Interacts with GBP7. Interacts with NOXO1. Forms a heterodimer with NOX3 and is essential for activity and cell membrane localization of NOX3. Interacts with NOX1. Post-translationally, phosphorylation at Thr-147 enhances NADPH oxidase activity by promoting NCF1/p47-phox binding. In terms of processing, ubiquitinated at Lys-149 likely by RNF145.

Its subcellular location is the cell membrane. Its function is as follows. Subunit of NADPH oxidase complexes that is required for the NADPH oxidase activity that generates, in various cell types, superoxide from molecular oxygen utilizing NADPH as an electron donor. Subunit of the phagocyte NADPH oxidase complex that mediates the transfer of electrons from cytosolic NADPH to O2 to produce the superoxide anion (O2(-)). In the activated complex, electrons are first transferred from NADPH to flavin adenine dinucleotide (FAD) and subsequently transferred via two heme molecules to molecular oxygen, producing superoxide through an outer-sphere reaction. Activation of the NADPH oxidase complex is initiated by the assembly of cytosolic subunits of the NADPH oxidase complex with the core NADPH oxidase complex to form a complex at the plasma membrane or phagosomal membrane. This activation process is initiated by phosphorylation dependent binding of the cytosolic NCF1/p47-phox subunit to the C-terminus of CYBA/p22-phox. Aassociates with NOX3 to form a functional NADPH oxidase constitutively generating superoxide. The sequence is that of Cytochrome b-245 light chain from Homo sapiens (Human).